Reading from the N-terminus, the 603-residue chain is Bifunctional 3-dehydroquinate dehydratase/shikimate dehydrogenase, chloroplastic (603 aa).

The segment covering 1–10 (MAASSTNARL) has biased composition (polar residues). The tract at residues 1-22 (MAASSTNARLTNPPRLLSKPRL) is disordered. A chloroplast-targeting transit peptide spans 1–66 (MAASSTNARL…VVFSDQRRRR (66 aa)). Positions 13–22 (PPRLLSKPRL) are enriched in low complexity. The segment at 96-313 (ICAPVMADSI…QPTIKDLLDL (218 aa)) is 3-dehydroquinate dehydratase. Residues Glu-124, Arg-126, and Arg-155 each coordinate 3-dehydroshikimate. Residue His-214 is the Proton acceptor; for 3-dehydroquinate dehydratase activity of the active site. 3-dehydroshikimate-binding residues include Lys-241, Arg-279, Ser-300, and Gln-304. Lys-241 (schiff-base intermediate with substrate; for 3-dehydroquinate dehydratase activity) is an active-site residue. Residues 328 to 558 (IIGKPVSHSK…VYTPRITRLL (231 aa)) are shikimate dehydrogenase. The shikimate site is built by Ser-336, Ser-338, Thr-381, Lys-385, Asn-406, and Asp-423. Lys-385 acts as the For shikimate dehydrogenase activity in catalysis. Asp-423 (for shikimate dehydrogenase activity) is an active-site residue. Residues Ala-461, Gly-463, Ala-464, Asn-483, Thr-485, Arg-488, Met-525, and Ala-548 each contribute to the NADP(+) site. Shikimate is bound at residue Tyr-550. Residue Gly-571 coordinates NADP(+). The shikimate site is built by Gln-578 and Gln-582.

This sequence in the N-terminal section; belongs to the type-I 3-dehydroquinase family. The protein in the C-terminal section; belongs to the shikimate dehydrogenase family. As to quaternary structure, monomer.

It localises to the plastid. The protein localises to the chloroplast. It catalyses the reaction 3-dehydroquinate = 3-dehydroshikimate + H2O. The enzyme catalyses shikimate + NADP(+) = 3-dehydroshikimate + NADPH + H(+). Its pathway is metabolic intermediate biosynthesis; chorismate biosynthesis; chorismate from D-erythrose 4-phosphate and phosphoenolpyruvate: step 3/7. It functions in the pathway metabolic intermediate biosynthesis; chorismate biosynthesis; chorismate from D-erythrose 4-phosphate and phosphoenolpyruvate: step 4/7. Functionally, bifunctional dehydroquinate dehydratase-shikimate dehydrogenase enzyme that catalyzes two steps in the chorismate biosynthesis pathway. This Arabidopsis thaliana (Mouse-ear cress) protein is Bifunctional 3-dehydroquinate dehydratase/shikimate dehydrogenase, chloroplastic.